We begin with the raw amino-acid sequence, 134 residues long: Isocitrate dehydrogenase [NAD] subunit alpha, mitochondrial (134 aa).

An N6-succinyllysine modification is found at lysine 37. Threonine 50 bears the Phosphothreonine mark. 3 residues coordinate substrate: arginine 64, arginine 74, and arginine 95.

The protein belongs to the isocitrate and isopropylmalate dehydrogenases family. As to quaternary structure, heterooligomer of subunits alpha (IDH3A), beta (IDH3B), and gamma (IDH3G) in the apparent ratio of 2:1:1. The heterodimer containing one IDH3A and one IDH3B subunit and the heterodimer containing one IDH3A and one IDH3G subunit assemble into a heterotetramer (which contains two subunits of IDH3A, one of IDH3B and one of IDH3G) and further into the heterooctamer. Mg(2+) is required as a cofactor. The cofactor is Mn(2+).

The protein resides in the mitochondrion. The catalysed reaction is D-threo-isocitrate + NAD(+) = 2-oxoglutarate + CO2 + NADH. The heterotetramer and the heterodimer composed of IDH3A and IDH3G subunits can be allosterically activated by citrate (CIT) or/and ADP, and the two activators can act independently or synergistically. The heterodimer composed of IDH3A and IDH3B subunits cannot be allosterically regulated and the allosteric regulation of the heterotetramer is through the IDH3G subunit and not the IDH3B subunit. The IDH3G subunit contains the allosteric site which consists of a CIT-binding site and an ADP-binding site, and the binding of CIT and ADP causes conformational changes at the allosteric site which are transmitted to the active site in the catalytic subunit (IDH3A) through a cascade of conformational changes at the heterodimer interface, leading to stabilization of the isocitrate-binding at the active site and thus activation of the enzyme. ATP can activate the heterotetramer and the heterodimer composed of IDH3A and IDH3G subunits at low concentrations but inhibits their activities at high concentrations, whereas ATP exhibits only inhibitory effect on the heterodimer composed of IDH3A and IDH3B subunits. Functionally, catalytic subunit of the enzyme which catalyzes the decarboxylation of isocitrate (ICT) into alpha-ketoglutarate. The heterodimer composed of the alpha (IDH3A) and beta (IDH3B) subunits and the heterodimer composed of the alpha (IDH3A) and gamma (IDH3G) subunits, have considerable basal activity but the full activity of the heterotetramer (containing two subunits of IDH3A, one of IDH3B and one of IDH3G) requires the assembly and cooperative function of both heterodimers. In Mesocricetus auratus (Golden hamster), this protein is Isocitrate dehydrogenase [NAD] subunit alpha, mitochondrial.